Here is a 540-residue protein sequence, read N- to C-terminus: Chaperonin GroEL (540 aa).

Residues 30-33, Lys-51, 87-91, Gly-415, 479-481, and Asp-495 contribute to the ATP site; these read TLGP, DGTTT, and NAA.

It belongs to the chaperonin (HSP60) family. In terms of assembly, forms a cylinder of 14 subunits composed of two heptameric rings stacked back-to-back. Interacts with the co-chaperonin GroES.

It is found in the cytoplasm. It carries out the reaction ATP + H2O + a folded polypeptide = ADP + phosphate + an unfolded polypeptide.. Functionally, together with its co-chaperonin GroES, plays an essential role in assisting protein folding. The GroEL-GroES system forms a nano-cage that allows encapsulation of the non-native substrate proteins and provides a physical environment optimized to promote and accelerate protein folding. This Pectobacterium carotovorum subsp. carotovorum (Erwinia carotovora subsp. carotovora) protein is Chaperonin GroEL.